The primary structure comprises 319 residues: tRNA U34 carboxymethyltransferase (319 aa).

Residues lysine 88, tryptophan 102, lysine 107, glycine 126, leucine 176–glutamate 177, methionine 192, tyrosine 196, and arginine 311 contribute to the carboxy-S-adenosyl-L-methionine site.

This sequence belongs to the class I-like SAM-binding methyltransferase superfamily. CmoB family. Homotetramer.

The enzyme catalyses carboxy-S-adenosyl-L-methionine + 5-hydroxyuridine(34) in tRNA = 5-carboxymethoxyuridine(34) in tRNA + S-adenosyl-L-homocysteine + H(+). Its function is as follows. Catalyzes carboxymethyl transfer from carboxy-S-adenosyl-L-methionine (Cx-SAM) to 5-hydroxyuridine (ho5U) to form 5-carboxymethoxyuridine (cmo5U) at position 34 in tRNAs. In Pseudomonas savastanoi pv. phaseolicola (strain 1448A / Race 6) (Pseudomonas syringae pv. phaseolicola (strain 1448A / Race 6)), this protein is tRNA U34 carboxymethyltransferase.